We begin with the raw amino-acid sequence, 1381 residues long: MYRAGEPGKRQPGPAPPRVRSVEVARGRAGYGFTLSGQAPCVLSCVMRGSPADFVGLRAGDQILAINEINVKKASHEDVVKLIGKCSGVLHMVIAEGTSHVESCSSDEEGGLYEGKGWLRPKLDSKALGINRAERVVEEVQSGGIFNMIFESSSLCASGPEPLKLKQRSLSESAALRLDAGQAGLCAPHPSMLSKEDISKVINDDSVFTVGLDSHDDFGLDASILNVAMVVGYLGSIELPSTSSNLEHDSLQAIRGCMRRLRAEQKIHSLVTMKVMHDCVQLVTDRAGVVAEYPAEKLAFSAVCPDDRRFFGLVTMQTNDDGGLAQEDEGALRTSCHVFMVDPDLFHHKIHQGIARRFGFACTADPDTSGCLEFPASSLPVLQFISVLYRDMGELIEGVRARAFLDGDADAHQNNSTSSNSDSGIGNFNQEEKSNRVLVVDLGGGSSRHGQGSSPGWESGGGRGSQPWSAPWNGAFCHDSEAGSPLETSPNTDRFWDLTKHSGPVSHMEVPPATLRSSIPPSKRGAAGSSCGFNQRWLPVHVLQEWQCGHASDQESYTDSTDGWSSVNCGTLPPPMSKIPADRYRVEGSFAQAPLSTQKRDWSRKAFGMQNLFGPHRNVRKTKEDKKSSKLGRGVALAQTSQRTSARRSFGRSRRFSITRSLDDLESATVSDGELTGADLKDCISNNSLSSNASLPSVQSCRRLRERRVASWAVSFERLLQDPVGVRYFSDFLRKEFSEENILFWQACECFSHVPAHDKKELSYRAREIFSKFLCSKATTPVNIDSQAQLADDILNAPHPDMFKEQQLQIFNLMKFDSYTRFLKSQLYQECVLAEVEGRTLPDSQQVPSSPASKHSISSDHSNVSTPKKLSGKSKSGRSLNEDVGEEDSEKKRRGAFFSWSRSRSTGRSQKKKDHGDHAHDAPHANGGLCRRESQGSVSSAGSLDLSEACRTSALEKDKAAKHCCVHLPDGTSCVVAVKSGFSIKEILSGLCERHGINGAAVDLFLVGGDKPLVLHQDSSILATRDLRLEKRTLFRLDLVPINRSVGLKAKPTKPVTEVLRPVVAKYGLDLGSLLVRLSGEKEPLDLGAPISSLDGQRVILEERDPSRGKVSTDKQKGAPVKQNSAVNSSPRNHLAMGEERTLGKSNSIKIRGENGKSARDPRLSKREESIAKIGKKKYQKINLDEAEEFFELISKAQSNRADDQRGLLRKEDLVLPEFLRLPAGSSELALSSPPPVKGYSKRAVTGHGQEGAAQTEESYSDSPATSPASAQSPCSAYSPGSAHSPGSAHSTPGPPGTTQPGEKPTKPSCVSMVQEGTTQAWRRLSPEMEAGGIQTVEDEQVADLTLMGEGDISSPNSTLLPPPPTPQDTPGPPRPGTSRF.

The PDZ domain occupies 21–98 (SVEVARGRAG…VLHMVIAEGT (78 aa)). Residues Ser171 and Ser194 each carry the phosphoserine modification. Residue Lys195 forms a Glycyl lysine isopeptide (Lys-Gly) (interchain with G-Cter in SUMO2) linkage. In terms of domain architecture, PID spans 223–390 (SILNVAMVVG…VLQFISVLYR (168 aa)). Disordered regions lie at residues 409 to 428 (ADAHQNNSTSSNSDSGIGNF), 442 to 528 (LGGG…GAAG), and 620 to 644 (RKTKEDKKSSKLGRGVALAQTSQRT). Polar residues predominate over residues 412–428 (HQNNSTSSNSDSGIGNF). 2 positions are modified to omega-N-methylarginine: Arg524 and Arg633. Residues Ser661 and Ser671 each carry the phosphoserine modification. An RGS domain is found at 715 to 832 (SFERLLQDPV…LKSQLYQECV (118 aa)). The disordered stretch occupies residues 842–942 (PDSQQVPSSP…ESQGSVSSAG (101 aa)). The span at 849–869 (SSPASKHSISSDHSNVSTPKK) shows a compositional bias: low complexity. Ser850 and Ser879 each carry phosphoserine. A compositionally biased stretch (basic and acidic residues) spans 914–923 (DHGDHAHDAP). Ser943 is subject to Phosphoserine. RBD domains are found at residues 962 to 1032 (KHCC…LEKR) and 1034 to 1104 (LFRL…LEER). A compositionally biased stretch (basic and acidic residues) spans 1102–1117 (EERDPSRGKVSTDKQK). Residues 1102–1169 (EERDPSRGKV…RDPRLSKREE (68 aa)) form a disordered region. Residues 1122 to 1132 (KQNSAVNSSPR) show a composition bias toward polar residues. Residues 1151–1169 (IRGENGKSARDPRLSKREE) show a composition bias toward basic and acidic residues. Residues 1187-1209 (AEEFFELISKAQSNRADDQRGLL) form the GoLoco domain. Disordered stretches follow at residues 1227–1318 (SELA…QEGT) and 1347–1381 (LMGEGDISSPNSTLLPPPPTPQDTPGPPRPGTSRF). Low complexity predominate over residues 1261 to 1280 (SDSPATSPASAQSPCSAYSP). Over residues 1361-1381 (LPPPPTPQDTPGPPRPGTSRF) the composition is skewed to pro residues.

Interacts with GNAI1, GNAI2 and GNAI3; the interactions are GDP-dependent. Expressed in brain.

It localises to the nucleus. The protein resides in the cytoplasm. The protein localises to the cell projection. It is found in the dendrite. Its subcellular location is the synapse. In terms of biological role, regulates G protein-coupled receptor signaling cascades. Inhibits signal transduction by increasing the GTPase activity of G protein alpha subunits, thereby driving them into their inactive GDP-bound form. The sequence is that of Regulator of G-protein signaling 12 (Rgs12) from Mus musculus (Mouse).